Here is a 798-residue protein sequence, read N- to C-terminus: Serine/threonine-protein kinase haspin (798 aa).

The disordered stretch occupies residues 1–110 (MAASLPGPGS…WKLRARPSLT (110 aa)). Phosphoserine is present on Ser58. A compositionally biased stretch (acidic residues) spans 59–70 (QSDDPDDPDDPD). At Ser93 the chain carries Phosphoserine; by AURKB. Thr97 is modified (phosphothreonine). The residue at position 143 (Ser143) is a Phosphoserine; by AURKB. The residue at position 147 (Ser147) is a Phosphoserine. The tract at residues 275–350 (LVVGNGPEGP…KHQEATETSL (76 aa)) is disordered. Residues 300–315 (CQERGLQEAVRREHQE) show a composition bias toward basic and acidic residues. One can recognise a Protein kinase domain in the interval 484–798 (LQRCEKIGEG…DLLCQHSLFK (315 aa)). ATP is bound by residues 490–498 (IGEGVFGEV), Lys511, 606–611 (EFGGID), 649–654 (DLHWGN), and 687–689 (DYT). Asp649 (proton acceptor) is an active-site residue.

It belongs to the protein kinase superfamily. Ser/Thr protein kinase family. Haspin subfamily. Mg(2+) serves as cofactor. Autophosphorylated on both serine and threonine residues. Strongly phosphorylated during mitosis but this does not appear to significantly affect its intrinsic kinase activity. Phosphorylation by AURKB is required for full activity toward histone H3 at 'Ser-3' in mitosis. Strongly expressed in testis. Also present in thymus and bone marrow and low levels observed in prostate, intestine, lung, spleen and lymph node. Expressed in fetal skin, liver, kidney and small intestine and also in proliferating but not non-proliferating cell lines.

It is found in the nucleus. The protein resides in the chromosome. It localises to the cytoplasm. Its subcellular location is the cytoskeleton. The protein localises to the spindle. It catalyses the reaction L-seryl-[protein] + ATP = O-phospho-L-seryl-[protein] + ADP + H(+). The enzyme catalyses L-threonyl-[protein] + ATP = O-phospho-L-threonyl-[protein] + ADP + H(+). Its activity is regulated as follows. Constitutive activity that does not require phosphorylation. Specifically inhibited by 3-(1H-indazol-5-yl)-N-propylimidazo[1,2-b]pyridazin-6-amine (CHR-6494). In terms of biological role, serine/threonine-protein kinase that phosphorylates histone H3 at 'Thr-3' (H3T3ph) during mitosis. May act through H3T3ph to both position and modulate activation of AURKB and other components of the chromosomal passenger complex (CPC) at centromeres to ensure proper chromatid cohesion, metaphase alignment and normal progression through the cell cycle. The polypeptide is Serine/threonine-protein kinase haspin (Homo sapiens (Human)).